We begin with the raw amino-acid sequence, 497 residues long: E3 ubiquitin-protein ligase CBL-C (497 aa).

A 4H region spans residues 7-145 (PQGWQWGEPR…SALFPEGKYC (139 aa)). In terms of domain architecture, Cbl-PTB spans 7-321 (PQGWQWGEPR…GKNHNPDLTE (315 aa)). Residues 146-218 (GHLYQITKGS…FEFDIFTRLF (73 aa)) form an EF-hand-like region. D199, T201, and E210 together coordinate Ca(2+). Residues 219–321 (QPWPTLLKNW…GKNHNPDLTE (103 aa)) form an SH2-like region. R264 contributes to the 4-O-phospho-L-tyrosine binding site. Residues 322-350 (LCRAVLNQCIQVSQEQLQLYQAMNSTFEL) are linker. The residue at position 341 (Y341) is a Phosphotyrosine; by SRC. The RING-type zinc-finger motif lies at 351–390 (CKICTERDKDVRIEPCGHLLCSCCLAAWQHSDSQTCPFCR). The segment at 351–497 (CKICTERDKD…QVREGATESS (147 aa)) is interaction with RET.

In terms of assembly, interacts with Ubiquitin-conjugating enzyme E2 UBE2D2 and UBE2D3. Interacts with EGFR (tyrosine phosphorylated). Interacts with the SH3 domain proteins LYN and CRK. Interacts (via RING-type zinc finger) with TGFB1I1 (via LIM zinc-binding domain 2); the interaction is direct and enhances the E3 activity. Interacts directly with RET (inactive) and CD2AP; dissociates from RET upon RET activation by GDNF which also increases the interaction with CD2AP suggesting dissociation as CBLC:CD2AP complex. Interacts with SRC; the interaction is enhanced when SRC is phosphorylated at 'Tyr-419'. Post-translationally, phosphorylated on multiple tyrosine residues by SRC. Autoubiquitinated, when phosphorylated at Tyr-341.

The catalysed reaction is S-ubiquitinyl-[E2 ubiquitin-conjugating enzyme]-L-cysteine + [acceptor protein]-L-lysine = [E2 ubiquitin-conjugating enzyme]-L-cysteine + N(6)-ubiquitinyl-[acceptor protein]-L-lysine.. Its activity is regulated as follows. Phosphorylation at Tyr-341 is necessary and sufficient for the activation of E3 activity. Its function is as follows. Acts as an E3 ubiquitin-protein ligase, which accepts ubiquitin from specific E2 ubiquitin-conjugating enzymes, and then transfers it to substrates promoting their degradation by the proteasome. Functionally coupled with the E2 ubiquitin-protein ligases UB2D1, UB2D2 and UB2D3. Regulator of EGFR mediated signal transduction; upon EGF activation, ubiquitinates EGFR. Inhibits EGF stimulated MAPK1 activation. Promotes ubiquitination of SRC phosphorylated at 'Tyr-419', has the highest ubiquitin ligase activity among CBL family proteins. In collaboration with CD2AP may act as regulatory checkpoint for Ret signaling by modulating the rate of RET degradation after ligand activation; CD2AP converts it from an inhibitor to a promoter of RET degradation; the function limits the potency of GDNF on neuronal survival. The sequence is that of E3 ubiquitin-protein ligase CBL-C (Cblc) from Rattus norvegicus (Rat).